A 256-amino-acid polypeptide reads, in one-letter code: Follistatin-related protein 3 (256 aa).

Positions 1–23 (MRPGALWPLLWGALVWAVGSVGA) are cleaved as a signal peptide. Residues 34-105 (GVCWLQQGKE…SCDGVECGPG (72 aa)) form the TB domain. Intrachain disulfides connect cysteine 36–cysteine 59, cysteine 46–cysteine 90, cysteine 60–cysteine 93, cysteine 97–cysteine 108, cysteine 102–cysteine 117, cysteine 119–cysteine 151, cysteine 123–cysteine 144, and cysteine 133–cysteine 165. An N-linked (GlcNAc...) asparagine glycan is attached at asparagine 71. One can recognise a Follistatin-like 1 domain in the interval 97–117 (CDGVECGPGKACRMLGGRPHC). Kazal-like domains lie at 111–167 (LGGR…RCQK) and 187–243 (SAHC…ICTG). One can recognise a Follistatin-like 2 domain in the interval 168–191 (SCAQVVCPRPQSCLVDQTGSAHCV). Intrachain disulfides connect cysteine 193–cysteine 227, cysteine 198–cysteine 220, and cysteine 209–cysteine 241. The N-linked (GlcNAc...) asparagine glycan is linked to asparagine 213.

In terms of assembly, interacts with INHBA and INHBB. Interacts with FN1. Interacts with ADAM12. Interacts with MLLT10; the interaction enhances MLLT10 in vitro transcriptional activity and self-association. Interacts with MSTN.

Its subcellular location is the secreted. It localises to the nucleus. In terms of biological role, the secreted form is a binding and antagonizing protein for members of the TGF-beta family, such as activin, BMP2 and MSTN. Inhibits activin A-, activin B-, BMP2- and MSDT-induced cellular signaling; more effective on activin A than on activin B. Involved in bone formation; inhibits osteoclast differentiation. Involved in hematopoiesis; involved in differentiation of hemopoietic progenitor cells, increases hematopoietic cell adhesion to fibronectin and seems to contribute to the adhesion of hematopoietic precursor cells to the bone marrow stroma. The nuclear form is probably involved in transcriptional regulation via interaction with MLLT10. This is Follistatin-related protein 3 (Fstl3) from Rattus norvegicus (Rat).